Here is a 345-residue protein sequence, read N- to C-terminus: L-threonine 3-dehydrogenase (345 aa).

Cys42 is a binding site for Zn(2+). Catalysis depends on charge relay system residues Thr44 and His47. The Zn(2+) site is built by His67, Glu68, Cys97, Cys100, Cys103, and Cys111. NAD(+)-binding positions include Ile179, Asp199, Arg204, 266–268 (LGI), and 290–291 (IY).

It belongs to the zinc-containing alcohol dehydrogenase family. In terms of assembly, homotetramer. Zn(2+) is required as a cofactor.

It localises to the cytoplasm. It carries out the reaction L-threonine + NAD(+) = (2S)-2-amino-3-oxobutanoate + NADH + H(+). It participates in amino-acid degradation; L-threonine degradation via oxydo-reductase pathway; glycine from L-threonine: step 1/2. In terms of biological role, catalyzes the NAD(+)-dependent oxidation of L-threonine to 2-amino-3-ketobutyrate. The polypeptide is L-threonine 3-dehydrogenase (Rhizobium johnstonii (strain DSM 114642 / LMG 32736 / 3841) (Rhizobium leguminosarum bv. viciae)).